Here is a 299-residue protein sequence, read N- to C-terminus: Taste receptor type 2 member 5 (299 aa).

Position 1 (Met1) is a topological domain, extracellular. The chain crosses the membrane as a helical span at residues 2–22 (LSAGLGLLMLVAVVEFLIGLI). The Cytoplasmic segment spans residues 23-45 (GNGVLVVWSFREWMRKFNWSSYN). The chain crosses the membrane as a helical span at residues 46 to 66 (LIILGLAGCRFLLQWLIILDL). Residues 67 to 82 (SLFPLFQSSRWLRYLS) lie on the Extracellular side of the membrane. A helical membrane pass occupies residues 83–103 (IFWVLVSQASLWFATFLSVFY). Residues 104–127 (CKKITTFDRPAYLWLKQRAYNLSL) lie on the Cytoplasmic side of the membrane. The helical transmembrane segment at 128 to 148 (WCLLGYFIINLLLTVQIGLMF) threads the bilayer. Residues 149 to 175 (YHPPQGNSSIRYPFESWQYLYAFRLNS) lie on the Extracellular side of the membrane. Asn155 carries N-linked (GlcNAc...) asparagine glycosylation. Residues 176 to 196 (GSYLPLMVFLVSSGMLIVSLY) traverse the membrane as a helical segment. At 197-223 (THHKKMKVHSAGRRDVRAKAHITALKS) the chain is on the cytoplasmic side. A helical transmembrane segment spans residues 224–244 (LGCFLFLHLVYIMASPFSITS). Residues 245–253 (KTYPPDLTS) are Extracellular-facing. A helical membrane pass occupies residues 254-274 (VFIWETLMAAYPSLHSLILIM). The Cytoplasmic segment spans residues 275–299 (GIPRVKQTCQKILWKTVCARRCWGP).

It belongs to the G-protein coupled receptor T2R family.

Its subcellular location is the membrane. Receptor that may play a role in the perception of bitterness and is gustducin-linked. May play a role in sensing the chemical composition of the gastrointestinal content. The activity of this receptor may stimulate alpha gustducin, mediate PLC-beta-2 activation and lead to the gating of TRPM5. This Gorilla gorilla gorilla (Western lowland gorilla) protein is Taste receptor type 2 member 5 (TAS2R5).